Here is a 672-residue protein sequence, read N- to C-terminus: Glycine--tRNA ligase beta subunit (672 aa).

The protein belongs to the class-II aminoacyl-tRNA synthetase family. In terms of assembly, tetramer of two alpha and two beta subunits.

It is found in the cytoplasm. The catalysed reaction is tRNA(Gly) + glycine + ATP = glycyl-tRNA(Gly) + AMP + diphosphate. This is Glycine--tRNA ligase beta subunit from Thermotoga sp. (strain RQ2).